A 1899-amino-acid chain; its full sequence is Protein TIC 214 (1899 aa).

6 consecutive transmembrane segments (helical) span residues 23-43 (VVVG…SYLF), 64-84 (FITG…HLAL), 87-107 (PHTI…WNNH), 124-144 (LSIQ…LFIL), 172-192 (VGWL…LVCI), and 217-237 (WTAR…LGVH). Disordered regions lie at residues 256–280 (EQKK…TKKE) and 1581–1619 (PKDY…GLDL). A compositionally biased stretch (basic and acidic residues) spans 269-280 (EKTFETKETKKE).

Belongs to the TIC214 family. As to quaternary structure, part of the Tic complex.

Its subcellular location is the plastid. It localises to the chloroplast inner membrane. Involved in protein precursor import into chloroplasts. May be part of an intermediate translocation complex acting as a protein-conducting channel at the inner envelope. The polypeptide is Protein TIC 214 (Ceratophyllum demersum (Rigid hornwort)).